A 613-amino-acid chain; its full sequence is Zinc finger CCCH domain-containing protein 59 (613 aa).

The interval 275-296 (NTTLSPYISPAKSVPVEETPKR) is disordered. 2 C3H1-type zinc fingers span residues 318-346 (AGGN…HDEE) and 350-378 (HYNR…HSLS).

This Oryza sativa subsp. japonica (Rice) protein is Zinc finger CCCH domain-containing protein 59.